The primary structure comprises 299 residues: Protein charybde (299 aa).

The segment at 73-103 is disordered; sequence LNTRPSATPPSAGGGGPLAGGGSVGMTTPKQ. Gly residues predominate over residues 84–96; the sequence is AGGGGPLAGGGSV.

This sequence belongs to the DDIT4 family.

The protein localises to the cytoplasm. Inhibits cell growth by regulating the Tor pathway upstream of the Tsc1-Tsc2 complex and downstream of Akt1. Acts as a cell death activator during head development. The chain is Protein charybde (chrb) from Drosophila melanogaster (Fruit fly).